Reading from the N-terminus, the 544-residue chain is MAKDIYFNEDARKSLLSGIEKLSNAVKVTLGPKGRNVLIDKKFGSPIVTKDGVSVAREIDLENSFENMGAQLLKEVAIKTNDLAGDGTTTATVLAYAIAREGLKNVSSGINPIGIKKGIDHAVALAAEKIRKSAKKITTKEEIAQVASISANNDTSIGEKIAEAMDRVGKDGVITVEESKTFDTTISYVEGMQFDRGYLSPYFSTNKENMSVSFDDTYILICEKKISTIKELLPVLEKVVNTNKPLLIIAEDIEGDALAALVLNSVRGALKVCAIKAPGFGDRRKAMLEDIAILTGGVLVSEELGLTLENVELEQLGQAKSVKVDKDNTTIINTGNREQIRERAELIKKQIEETSSEYDKEKLQERLAKLVGGVAVINVGAVTEVELKEKKHRVEDALSATRAAVEEGVVPGGGSTLIEVAMYLDTVDVSKLSYEEKQGFEIVKRSLEEPMRQIISNAGFESSIYIHQIKTDKKGLGFDAASFKWVNMIESGIIDPAKVTRSALQNAASIAGLLLTTECAITEIKEEKNSAGGNYPMDPGMGMM.

ATP contacts are provided by residues 29–32, Lys-50, 86–90, Gly-413, 479–481, and Asp-495; these read TLGP, DGTTT, and DAA.

It belongs to the chaperonin (HSP60) family. As to quaternary structure, forms a cylinder of 14 subunits composed of two heptameric rings stacked back-to-back. Interacts with the co-chaperonin GroES.

The protein resides in the cytoplasm. It catalyses the reaction ATP + H2O + a folded polypeptide = ADP + phosphate + an unfolded polypeptide.. Its function is as follows. Together with its co-chaperonin GroES, plays an essential role in assisting protein folding. The GroEL-GroES system forms a nano-cage that allows encapsulation of the non-native substrate proteins and provides a physical environment optimized to promote and accelerate protein folding. The chain is Chaperonin GroEL from Borrelia duttonii (strain Ly).